Reading from the N-terminus, the 231-residue chain is uncharacterized protein (231 aa).

Residues L86 to P106 form a helical membrane-spanning segment.

It localises to the membrane. This is an uncharacterized protein from Methanocaldococcus jannaschii (strain ATCC 43067 / DSM 2661 / JAL-1 / JCM 10045 / NBRC 100440) (Methanococcus jannaschii).